We begin with the raw amino-acid sequence, 156 residues long: MNITVLAVGTKMPRWVDEAVAEYAKRFGRDAAYAFKEIKPEKRGAGVNAVQGMAAEEKRILEAIPQGAFLVVLDERGKAPTSVELAEHLKSWRQNGEHVCFVIGGADGMTDRLKQQARMMMRLSSLTLPHGMVRVLLTEQLYRAVSILHNHPYHRE.

Residues L73, G104, and 123-128 (LSSLTL) each bind S-adenosyl-L-methionine.

The protein belongs to the RNA methyltransferase RlmH family. Homodimer.

The protein resides in the cytoplasm. It catalyses the reaction pseudouridine(1915) in 23S rRNA + S-adenosyl-L-methionine = N(3)-methylpseudouridine(1915) in 23S rRNA + S-adenosyl-L-homocysteine + H(+). Specifically methylates the pseudouridine at position 1915 (m3Psi1915) in 23S rRNA. This chain is Ribosomal RNA large subunit methyltransferase H, found in Neisseria gonorrhoeae (strain ATCC 700825 / FA 1090).